Consider the following 780-residue polypeptide: Acyl-CoA dehydrogenase family member 11 (780 aa).

Residue Lys177 is modified to N6-acetyllysine. Tyr324 carries the post-translational modification Phosphotyrosine. Lys391 is subject to N6-succinyllysine. FAD-binding positions include Phe504–Ser514 and Trp538–Ser540. Residue Ser514 coordinates substrate. Gly629–Arg632 provides a ligand contact to substrate. Residues Arg657, Gln727, and Gln727–Gly731 each bind FAD. Residue Gly755 participates in substrate binding. Pro756–Glu758 contributes to the FAD binding site.

Belongs to the acyl-CoA dehydrogenase family. Homodimer. FAD serves as cofactor. As to expression, widely expressed with highest levels in brain followed by liver, heart and kidney.

The protein localises to the peroxisome. Its subcellular location is the mitochondrion membrane. It carries out the reaction a 2,3-saturated acyl-CoA + oxidized [electron-transfer flavoprotein] + H(+) = a (2E)-enoyl-CoA + reduced [electron-transfer flavoprotein]. The enzyme catalyses docosanoyl-CoA + oxidized [electron-transfer flavoprotein] + H(+) = (2E)-docosenoyl-CoA + reduced [electron-transfer flavoprotein]. The catalysed reaction is tetracosanoyl-CoA + oxidized [electron-transfer flavoprotein] + H(+) = (2E)-tetracosenoyl-CoA + reduced [electron-transfer flavoprotein]. It catalyses the reaction eicosanoyl-CoA + oxidized [electron-transfer flavoprotein] + H(+) = (2E)-eicosenoyl-CoA + reduced [electron-transfer flavoprotein]. It carries out the reaction hexacosanoyl-CoA + oxidized [electron-transfer flavoprotein] + H(+) = (2E)-hexacosenoyl-CoA + reduced [electron-transfer flavoprotein]. The enzyme catalyses tricosanoyl-CoA + oxidized [electron-transfer flavoprotein] + H(+) = (2E)-tricosenoyl-CoA + reduced [electron-transfer flavoprotein]. It functions in the pathway lipid metabolism; fatty acid beta-oxidation. Functionally, acyl-CoA dehydrogenase, that exhibits maximal activity towards saturated C22-CoA. Probably participates in beta-oxydation and energy production but could also play a role in the metabolism of specific fatty acids to control fatty acids composition of cellular lipids in brain. In Homo sapiens (Human), this protein is Acyl-CoA dehydrogenase family member 11 (ACAD11).